The chain runs to 172 residues: Small ribosomal subunit protein uS5 (172 aa).

Residues 17-80 enclose the S5 DRBM domain; that stretch reads LREKMIAVNR…DEARRKMVKV (64 aa).

Belongs to the universal ribosomal protein uS5 family. In terms of assembly, part of the 30S ribosomal subunit. Contacts proteins S4 and S8.

Functionally, with S4 and S12 plays an important role in translational accuracy. Located at the back of the 30S subunit body where it stabilizes the conformation of the head with respect to the body. This chain is Small ribosomal subunit protein uS5, found in Ralstonia nicotianae (strain ATCC BAA-1114 / GMI1000) (Ralstonia solanacearum).